Consider the following 224-residue polypeptide: tRNA (guanine-N(7)-)-methyltransferase (224 aa).

S-adenosyl-L-methionine is bound by residues Glu-57, Asp-82, and Asp-109. Residue Asp-167 participates in substrate binding.

It belongs to the class I-like SAM-binding methyltransferase superfamily. TrmB family.

The catalysed reaction is guanosine(46) in tRNA + S-adenosyl-L-methionine = N(7)-methylguanosine(46) in tRNA + S-adenosyl-L-homocysteine. Its pathway is tRNA modification; N(7)-methylguanine-tRNA biosynthesis. Functionally, catalyzes the formation of N(7)-methylguanine at position 46 (m7G46) in tRNA. The chain is tRNA (guanine-N(7)-)-methyltransferase from Chloroflexus aggregans (strain MD-66 / DSM 9485).